Consider the following 314-residue polypeptide: DNA-directed RNA polymerase subunit alpha (314 aa).

Residues 1-228 (MIEIEKPRIE…EHLNIFVGLT (228 aa)) are alpha N-terminal domain (alpha-NTD). The segment at 246–314 (EKVLEMSIEE…DLGLGLRKED (69 aa)) is alpha C-terminal domain (alpha-CTD).

This sequence belongs to the RNA polymerase alpha chain family. In terms of assembly, homodimer. The RNAP catalytic core consists of 2 alpha, 1 beta, 1 beta' and 1 omega subunit. When a sigma factor is associated with the core the holoenzyme is formed, which can initiate transcription.

It carries out the reaction RNA(n) + a ribonucleoside 5'-triphosphate = RNA(n+1) + diphosphate. Functionally, DNA-dependent RNA polymerase catalyzes the transcription of DNA into RNA using the four ribonucleoside triphosphates as substrates. The protein is DNA-directed RNA polymerase subunit alpha of Staphylococcus aureus (strain Mu3 / ATCC 700698).